Reading from the N-terminus, the 367-residue chain is C-C chemokine receptor type 9 (367 aa).

The Extracellular portion of the chain corresponds to 1–46; it reads MVPTEATSLILNPSDDYGYDGTPPMEYDTNLTDYFCEKSHVRQFAG. Residue Asn-30 is glycosylated (N-linked (GlcNAc...) asparagine). 2 disulfides stabilise this stretch: Cys-36/Cys-287 and Cys-117/Cys-196. The chain crosses the membrane as a helical span at residues 47–72; sequence HFLPPLYWLVFIVGAVGNSLVILVYW. The Cytoplasmic segment spans residues 73-83; the sequence is YCTRVKTMTDM. A helical membrane pass occupies residues 84-107; sequence FLLNLAIADLLFLTTLPFWAIAAA. The Extracellular segment spans residues 108–118; the sequence is DQWKFQTFMCK. A helical membrane pass occupies residues 119–148; the sequence is VVNSMYKMNFYSCVLLIMCISVDRYIAIAQ. At 149-157 the chain is on the cytoplasmic side; the sequence is AMRAQMWRQ. The chain crosses the membrane as a helical span at residues 158-183; that stretch reads KRLLYSKMVCFTIWVMAAALCLPELL. Residues 184–206 are Extracellular-facing; that stretch reads YSQVKEEHGTAICTVVYSSNEST. A glycan (N-linked (GlcNAc...) asparagine) is linked at Asn-203. A helical membrane pass occupies residues 207-241; the sequence is KLKSAVLTLKVTLGFFLPFVVMACCYAIIIHTLIR. At 242-246 the chain is on the cytoplasmic side; it reads AKKSS. A helical membrane pass occupies residues 247 to 281; it reads KHKALKVTITVLTVFVLSQFPHNCVLLVQTIDAYA. Topologically, residues 282 to 288 are extracellular; sequence TFISSCA. Residues 289–319 traverse the membrane as a helical segment; that stretch reads LSIKIDICFQVTQTVAFFHSCLNPVLYVFVG. The Cytoplasmic segment spans residues 320-367; the sequence is ERFRRDLVKTLKNLGCISQAQWVSFTRREGSLKLSSMLLETTSGALSF.

It belongs to the G-protein coupled receptor 1 family.

The protein resides in the cell membrane. Functionally, receptor for chemokine SCYA25/TECK. Subsequently transduces a signal by increasing the intracellular calcium ions level. The protein is C-C chemokine receptor type 9 (CCR9) of Ovis aries (Sheep).